A 130-amino-acid chain; its full sequence is Glycine cleavage system H protein (130 aa).

Residues 24 to 106 (SVTVGITEHA…YGDGWIMRIQ (83 aa)) form the Lipoyl-binding domain. Position 65 is an N6-lipoyllysine (lysine 65).

The protein belongs to the GcvH family. As to quaternary structure, the glycine cleavage system is composed of four proteins: P, T, L and H. (R)-lipoate is required as a cofactor.

Functionally, the glycine cleavage system catalyzes the degradation of glycine. The H protein shuttles the methylamine group of glycine from the P protein to the T protein. In Halorhodospira halophila (strain DSM 244 / SL1) (Ectothiorhodospira halophila (strain DSM 244 / SL1)), this protein is Glycine cleavage system H protein.